Consider the following 302-residue polypeptide: tRNA-cytidine(32) 2-sulfurtransferase (302 aa).

A PP-loop motif motif is present at residues 45–50; the sequence is SGGKDS. Residues C120, C123, and C211 each contribute to the [4Fe-4S] cluster site.

The protein belongs to the TtcA family. In terms of assembly, homodimer. Requires Mg(2+) as cofactor. [4Fe-4S] cluster is required as a cofactor.

The protein resides in the cytoplasm. The enzyme catalyses cytidine(32) in tRNA + S-sulfanyl-L-cysteinyl-[cysteine desulfurase] + AH2 + ATP = 2-thiocytidine(32) in tRNA + L-cysteinyl-[cysteine desulfurase] + A + AMP + diphosphate + H(+). It participates in tRNA modification. Functionally, catalyzes the ATP-dependent 2-thiolation of cytidine in position 32 of tRNA, to form 2-thiocytidine (s(2)C32). The sulfur atoms are provided by the cysteine/cysteine desulfurase (IscS) system. This is tRNA-cytidine(32) 2-sulfurtransferase from Cellvibrio japonicus (strain Ueda107) (Pseudomonas fluorescens subsp. cellulosa).